Reading from the N-terminus, the 337-residue chain is Large ribosomal subunit protein uL3 (337 aa).

The tract at residues 1–20 (MASIHRPKRGSLAFSPRKRA) is disordered.

It belongs to the universal ribosomal protein uL3 family. Part of the 50S ribosomal subunit. Forms a cluster with proteins L14 and L24e.

Functionally, one of the primary rRNA binding proteins, it binds directly near the 3'-end of the 23S rRNA, where it nucleates assembly of the 50S subunit. The sequence is that of Large ribosomal subunit protein uL3 from Methanosarcina mazei (strain ATCC BAA-159 / DSM 3647 / Goe1 / Go1 / JCM 11833 / OCM 88) (Methanosarcina frisia).